We begin with the raw amino-acid sequence, 400 residues long: Dual specificity mitogen-activated protein kinase kinase 2 (400 aa).

Met-1 is modified (N-acetylmethionine). The residue at position 23 (Ser-23) is a Phosphoserine. Positions 72–369 (FERISELGAG…LKMLMSHTFI (298 aa)) constitute a Protein kinase domain. ATP-binding positions include 78-86 (LGAGNGGVV) and Lys-101. The active-site Proton acceptor is the Asp-194. Ser-222 carries the post-translational modification Phosphoserine; by RAF. 4 positions are modified to phosphoserine: Ser-226, Ser-293, Ser-295, and Ser-306. The interval 288-309 (EGEPHSISPRPRPPGRPISGHG) is disordered. Thr-394 and Thr-396 each carry phosphothreonine.

It belongs to the protein kinase superfamily. STE Ser/Thr protein kinase family. MAP kinase kinase subfamily. In terms of assembly, interacts with MORG1. Interacts with SGK1. Interacts with KSR1. Interacts with KSR1 and BRAF; the interaction with KSR1 mediates KSR1-BRAF dimerization. Interacts with GLS. Mg(2+) serves as cofactor. Post-translationally, MAPKK is itself dependent on Ser/Thr phosphorylation for activity catalyzed by MAP kinase kinase kinases (RAF or MEKK1).

The protein resides in the cytoplasm. The protein localises to the membrane. The catalysed reaction is L-seryl-[protein] + ATP = O-phospho-L-seryl-[protein] + ADP + H(+). The enzyme catalyses L-threonyl-[protein] + ATP = O-phospho-L-threonyl-[protein] + ADP + H(+). It catalyses the reaction L-tyrosyl-[protein] + ATP = O-phospho-L-tyrosyl-[protein] + ADP + H(+). Its function is as follows. Catalyzes the concomitant phosphorylation of a threonine and a tyrosine residue in a Thr-Glu-Tyr sequence located in MAP kinases. Activates the ERK1 and ERK2 MAP kinases. Activates BRAF in a KSR1 or KSR2-dependent manner; by binding to KSR1 or KSR2 releases the inhibitory intramolecular interaction between KSR1 or KSR2 protein kinase and N-terminal domains which promotes KSR1 or KSR2-BRAF dimerization and BRAF activation. The sequence is that of Dual specificity mitogen-activated protein kinase kinase 2 (MAP2K2) from Canis lupus familiaris (Dog).